A 280-amino-acid chain; its full sequence is MNENNIQKLQKIIEHYFIKQQNISKNNIDLNLRNTVQEVIDNLNNGILRVSEKINNKWITHQWIKKAIILFFTITNNKLMTWGNARFFDKCPTKFENKSEEYFKNRKIRIIPPATVRYGAYIANNTVIMPSYVNIGAYIDTGTMIDTWATIGSCAHIGKNTHISGGVGIGGVLEPIQANPTIIEDNCFIGARSEIAEGVIIEENSVLAMGVFISQSTKIYNRSTGHVHYGYVPSGSVVIPGSLPSEDGKSSTYCAIIVKTVDSRTKNKIQINNLLREYCN.

R109 and D146 together coordinate substrate.

This sequence belongs to the transferase hexapeptide repeat family. In terms of assembly, homotrimer.

The protein localises to the cytoplasm. It catalyses the reaction (S)-2,3,4,5-tetrahydrodipicolinate + succinyl-CoA + H2O = (S)-2-succinylamino-6-oxoheptanedioate + CoA. It participates in amino-acid biosynthesis; L-lysine biosynthesis via DAP pathway; LL-2,6-diaminopimelate from (S)-tetrahydrodipicolinate (succinylase route): step 1/3. This Blochmanniella floridana protein is 2,3,4,5-tetrahydropyridine-2,6-dicarboxylate N-succinyltransferase.